A 513-amino-acid chain; its full sequence is Serine/threonine-protein kinase ppk8 (513 aa).

The segment covering 98–114 has biased composition (low complexity); sequence LSSTLTSMSEESSSTES. The tract at residues 98-120 is disordered; that stretch reads LSSTLTSMSEESSSTESKFATLN. Residues 241 to 505 form the Protein kinase domain; sequence GKLNNVIGEG…ISGARSTTWM (265 aa). ATP-binding positions include 247–255 and Lys-270; that span reads IGEGASSFI. Asp-364 serves as the catalytic Proton acceptor.

It belongs to the protein kinase superfamily. Ser/Thr protein kinase family.

It is found in the cytoplasm. It localises to the nucleus. It carries out the reaction L-seryl-[protein] + ATP = O-phospho-L-seryl-[protein] + ADP + H(+). The enzyme catalyses L-threonyl-[protein] + ATP = O-phospho-L-threonyl-[protein] + ADP + H(+). This Schizosaccharomyces pombe (strain 972 / ATCC 24843) (Fission yeast) protein is Serine/threonine-protein kinase ppk8 (ppk8).